The primary structure comprises 138 residues: Acidic phospholipase A2 (138 aa).

Positions 1–16 are cleaved as a signal peptide; that stretch reads MRTLWIVAVLLLGVEG. 7 disulfides stabilise this stretch: Cys-42-Cys-131, Cys-44-Cys-60, Cys-59-Cys-111, Cys-65-Cys-138, Cys-66-Cys-104, Cys-73-Cys-97, and Cys-91-Cys-102. Ca(2+) is bound by residues Tyr-43, Gly-45, and Gly-47. The active site involves His-63. Ca(2+) is bound at residue Asp-64. Residue Asp-105 is part of the active site.

Belongs to the phospholipase A2 family. Group II subfamily. D49 sub-subfamily. As to quaternary structure, homodimer. Requires Ca(2+) as cofactor. In terms of tissue distribution, expressed by the venom gland.

It is found in the secreted. It carries out the reaction a 1,2-diacyl-sn-glycero-3-phosphocholine + H2O = a 1-acyl-sn-glycero-3-phosphocholine + a fatty acid + H(+). Its function is as follows. PLA2 catalyzes the calcium-dependent hydrolysis of the 2-acyl groups in 3-sn-phosphoglycerides. This is Acidic phospholipase A2 from Crotalus atrox (Western diamondback rattlesnake).